The primary structure comprises 299 residues: Circadian clock oscillator protein KaiA (299 aa).

The KaiA N-terminal domain occupies 1 to 169 (MVSKLSLYLV…RLAEKLRERL (169 aa)). A psR domain, binds oxidized quinones region spans residues 3–135 (SKLSLYLVTP…LHLAPSCALS (133 aa)). The segment at 170 to 178 (GYLGVYYKR) is flexible linker. The KaiA C-terminal domain maps to 179–287 (NPKYFYRSLS…CEMYRRSIPR (109 aa)).

In terms of assembly, homodimer. The KaiABC complex composition changes during the circadian cycle to control KaiC phosphorylation. Complexes KaiC(6), KaiA(2-4):KaiC(6), KaiB(6):KaiC(6) and KaiC(6):KaiB(6):KaiA(12) are among the most important forms, many form cooperatively. KaiA and CikA bind to the same region of the KaiB(fs) form and therefore compete.

Its function is as follows. Key component of the KaiABC oscillator complex, which constitutes the main circadian regulator in cyanobacteria. Complex composition changes during the circadian cycle to control KaiC phosphorylation. KaiA stimulates KaiC autophosphorylation, while KaiB sequesters KaiA, leading to KaiC autodephosphorylation. KaiA binding to the KaiC CII domain during the subjective day yields KaiA(2-4):KaiC(6) complexes which stimulate KaiC autophosphorylation. Phospho-Ser-431 KaiC accumulation triggers binding of KaiB during the subjective night to form the KaiB(6):KaiC(6) complex, leading to changes in the output regulators CikA and SasA. KaiB(6):KaiC(6) formation exposes a site for KaiA binding on KaiB that sequesters KaiA from KaiC's CII domain, making the KaiC(6):KaiB(6):KaiA(12) complex resulting in KaiC autodephosphorylation. Complete dephosphorylation of KaiC leads to dissociation of KaiA(2):KaiB(1), completing 1 cycle of the Kai oscillator. In terms of biological role, binds oxidized quinones via the N-terminal PsR domain, allowing it to sense redox changes and possibly mediate clock input. The polypeptide is Circadian clock oscillator protein KaiA (Picosynechococcus sp. (strain ATCC 27264 / PCC 7002 / PR-6) (Agmenellum quadruplicatum)).